The sequence spans 357 residues: Peptide chain release factor 1 (357 aa).

An N5-methylglutamine modification is found at Gln233.

The protein belongs to the prokaryotic/mitochondrial release factor family. Methylated by PrmC. Methylation increases the termination efficiency of RF1.

The protein resides in the cytoplasm. Its function is as follows. Peptide chain release factor 1 directs the termination of translation in response to the peptide chain termination codons UAG and UAA. The polypeptide is Peptide chain release factor 1 (Leuconostoc citreum (strain KM20)).